Consider the following 723-residue polypeptide: Threonine--tRNA ligase, mitochondrial (723 aa).

Serine 57 is subject to Phosphoserine. Residues 64-126 (RTIKISLPEG…ETDCHLRFLT (63 aa)) form the TGS domain.

It belongs to the class-II aminoacyl-tRNA synthetase family. As to quaternary structure, homodimer.

It is found in the mitochondrion matrix. The enzyme catalyses tRNA(Thr) + L-threonine + ATP = L-threonyl-tRNA(Thr) + AMP + diphosphate + H(+). Functionally, catalyzes the attachment of threonine to tRNA(Thr) in a two-step reaction: threonine is first activated by ATP to form Thr-AMP and then transferred to the acceptor end of tRNA(Thr). Also edits incorrectly charged tRNA(Thr) via its editing domain. The polypeptide is Threonine--tRNA ligase, mitochondrial (Tars2) (Rattus norvegicus (Rat)).